The chain runs to 396 residues: N-acyl-phosphatidylethanolamine-hydrolyzing phospholipase D (396 aa).

N-acetylmethionine is present on Met-1. 2 stretches are compositionally biased toward polar residues: residues Met-1–Pro-12 and Asn-26–Ser-37. Positions Met-1–Arg-41 are disordered. Residues His-185 and His-187 each coordinate Zn(2+). Tyr-188 is a binding site for an N-acyl-1,2-diacyl-sn-glycero-3-phosphoethanolamine. Zn(2+)-binding residues include Asp-189, His-190, and His-253. Lys-256 contacts deoxycholate. Asp-284 is a binding site for Zn(2+). His-321 provides a ligand contact to an N-acyl-1,2-diacyl-sn-glycero-3-phosphoethanolamine. His-343 is a Zn(2+) binding site. Deoxycholate is bound at residue Ala-348.

The protein belongs to the NAPE-PLD family. In terms of assembly, homodimer. Bile acids promote the assembly of inactive monomers into an active dimer and enable catalysis. The cofactor is Zn(2+). Widely expressed. Highest expression in brain, kidney and testis (at protein level). Expressed in adipose tissue (at protein level).

It localises to the golgi apparatus membrane. The protein localises to the early endosome membrane. Its subcellular location is the nucleus envelope. The protein resides in the nucleus. It is found in the nucleoplasm. It catalyses the reaction an N-acyl-1,2-diacyl-sn-glycero-3-phosphoethanolamine + H2O = an N-acylethanolamine + a 1,2-diacyl-sn-glycero-3-phosphate + H(+). It carries out the reaction N-butanoyl-1-hexadecanoyl-2-(9Z,12Z-octadecadienoyl)-sn-glycero-3-phosphoethanolamine + H2O = N-butanoyl ethanolamine + 1-hexadecanoyl-2-(9Z,12Z-octadecadienoyl)-sn-glycero-3-phosphate + H(+). The enzyme catalyses N-hexanoyl-1-hexadecanoyl-2-(9Z,12Z-octadecadienoyl)-sn-glycero-3-phosphoethanolamine + H2O = N-hexanoyl ethanolamine + 1-hexadecanoyl-2-(9Z,12Z-octadecadienoyl)-sn-glycero-3-phosphate + H(+). The catalysed reaction is N-octanoyl-1-hexadecanoyl-2-(9Z,12Z-octadecadienoyl)-sn-glycero-3-phosphoethanolamine + H2O = N-octanoyl ethanolamine + 1-hexadecanoyl-2-(9Z,12Z-octadecadienoyl)-sn-glycero-3-phosphate + H(+). It catalyses the reaction N-decanoyl-1-hexadecanoyl-2-(9Z,12Z-octadecadienoyl)-sn-glycero-3-phosphoethanolamine + H2O = N-decanoyl ethanolamine + 1-hexadecanoyl-2-(9Z,12Z-octadecadienoyl)-sn-glycero-3-phosphate + H(+). It carries out the reaction N-dodecanoyl-1,2-di-(9Z-octadecenoyl)-sn-glycero-3-phosphoethanolamine + H2O = N-dodecanoylethanolamine + 1,2-di-(9Z-octadecenoyl)-sn-glycero-3-phosphate + H(+). The enzyme catalyses N-tetradecanoyl-1,2-di-(9Z-octadecenoyl)-sn-glycero-3-phosphoethanolamine + H2O = N-tetradecanoylethanolamine + 1,2-di-(9Z-octadecenoyl)-sn-glycero-3-phosphate + H(+). The catalysed reaction is N-hexadecanoyl-1,2-di-(9Z-octadecenoyl)-sn-glycero-3-phosphoethanolamine + H2O = N-hexadecanoylethanolamine + 1,2-di-(9Z-octadecenoyl)-sn-glycero-3-phosphate + H(+). It catalyses the reaction N,1-dihexadecanoyl-2-(9Z,12Z-octadecadienoyl)-sn-glycero-3-phosphoethanolamine + H2O = 1-hexadecanoyl-2-(9Z,12Z-octadecadienoyl)-sn-glycero-3-phosphate + N-hexadecanoylethanolamine + H(+). It carries out the reaction N-octadecanoyl-1,2-di-(9Z-octadecenoyl)-sn-glycero-3-phosphoethanolamine + H2O = N-octadecanoyl ethanolamine + 1,2-di-(9Z-octadecenoyl)-sn-glycero-3-phosphate + H(+). The enzyme catalyses N,1,2-tri-(9Z-octadecenoyl)-sn-glycero-3-phosphoethanolamine + H2O = N-(9Z-octadecenoyl) ethanolamine + 1,2-di-(9Z-octadecenoyl)-sn-glycero-3-phosphate + H(+). The catalysed reaction is N-(5Z,8Z,11Z,14Z-eicosatetraenoyl)-1,2-diacyl-sn-glycero-3-phosphoethanolamine + H2O = N-(5Z,8Z,11Z,14Z-eicosatetraenoyl)-ethanolamine + a 1,2-diacyl-sn-glycero-3-phosphate + H(+). It catalyses the reaction N-(5Z,8Z,11Z,14Z-eicosatetraenoyl)-1,2-di-(9Z-octadecenoyl)-sn-glycero-3-phosphoethanolamine + H2O = N-(5Z,8Z,11Z,14Z-eicosatetraenoyl)-ethanolamine + 1,2-di-(9Z-octadecenoyl)-sn-glycero-3-phosphate + H(+). It carries out the reaction 1-O-(1Z-octadecenoyl)-2-(9Z-octadecenoyl)-sn-glycero-3-phospho-N-hexadecanoyl-ethanolamine + H2O = 1-O-(1Z-octadecenoyl)-2-(9Z-octadecenoyl)-sn-glycero-3-phosphate + N-hexadecanoylethanolamine + H(+). The enzyme catalyses N,1-diacyl-sn-glycero-3-phosphoethanolamine + H2O = an N-acylethanolamine + a 1-acyl-sn-glycero-3-phosphate + H(+). The catalysed reaction is N,1-dihexadecanoyl-sn-glycero-3-phosphoethanolamine + H2O = N-hexadecanoylethanolamine + 1-hexadecanoyl-sn-glycero-3-phosphate + H(+). It catalyses the reaction N-(5Z,8Z,11Z,14Z-eicosatetraenoyl)-1-(9Z-octadecenoyl)-sn-glycero-3-phosphoethanolamine + H2O = N-(5Z,8Z,11Z,14Z-eicosatetraenoyl)-ethanolamine + 1-(9Z-octadecenoyl)-sn-glycero-3-phosphate + H(+). Activated by divalent cations. Activated by bile acids. Activated by membrane phospholipids such as phosphatidylethanolamines. Inhibited by cardiolipins. D-type phospholipase that hydrolyzes N-acyl-phosphatidylethanolamines (NAPEs) to produce bioactive N-acylethanolamines/fatty acid ethanolamides (NAEs/FAEs) and phosphatidic acid. Cleaves the terminal phosphodiester bond of diacyl- and alkenylacyl-NAPEs, primarily playing a role in the generation of long-chain saturated and monounsaturated NAEs in the brain. May control NAPE homeostasis in dopaminergic neuron membranes and regulate neuron survival, partly through RAC1 activation. As a regulator of lipid metabolism in the adipose tissue, mediates the crosstalk between adipocytes, gut microbiota and immune cells to control body temperature and weight. In particular, regulates energy homeostasis by promoting cold-induced brown or beige adipocyte differentiation program to generate heat from fatty acids and glucose. Has limited D-type phospholipase activity toward N-acyl lyso-NAPEs. The chain is N-acyl-phosphatidylethanolamine-hydrolyzing phospholipase D (Napepld) from Rattus norvegicus (Rat).